A 146-amino-acid polypeptide reads, in one-letter code: ATP synthase epsilon chain (146 aa).

The interval 103-122 is disordered; it reads SAKKRAEQHMQEAKEKHNER.

It belongs to the ATPase epsilon chain family. In terms of assembly, F-type ATPases have 2 components, CF(1) - the catalytic core - and CF(0) - the membrane proton channel. CF(1) has five subunits: alpha(3), beta(3), gamma(1), delta(1), epsilon(1). CF(0) has three main subunits: a, b and c.

It localises to the cell membrane. Functionally, produces ATP from ADP in the presence of a proton gradient across the membrane. This Lactobacillus johnsonii (strain CNCM I-12250 / La1 / NCC 533) protein is ATP synthase epsilon chain.